The sequence spans 362 residues: MSNIAILAGDGIGPEVMVEAKKVLNTVASKFDFEITTQDYDIGGAAIDNHGNALPDSTMAGCIESDAILFGSVGGPKWANLPPTEQPERCALLGLRSHFDLFCNMRPATLQPALSSLSTLRSDISEQGFDVLVIRELTGDIYFGEPKGRRGEGEEETGFDSMFYSRREVKRISHLAFQAAQKRNNKVTSVDKANVLATSQLWRQVVEEVAVEYPDVELEHLYVDNAAMQLVRDPNQFDVMLCPNLFGDILSDICAMITGSMGLLPSASLNSDGFGMYEPAGGSAPDIAGLGVANPIAQILSAALMLRYSLNQGAAAKAIEDAVSNALDNGVLTADLLPANERKNAKSTSEVGDYICKQIESA.

75–88 lines the NAD(+) pocket; it reads GPKWANLPPTEQPE. Substrate-binding residues include arginine 96, arginine 106, arginine 135, and aspartate 224. Mg(2+) contacts are provided by aspartate 224, aspartate 248, and aspartate 252. An NAD(+)-binding site is contributed by 282–294; it reads GSAPDIAGLGVAN.

This sequence belongs to the isocitrate and isopropylmalate dehydrogenases family. LeuB type 1 subfamily. As to quaternary structure, homodimer. Mg(2+) is required as a cofactor. It depends on Mn(2+) as a cofactor.

Its subcellular location is the cytoplasm. The catalysed reaction is (2R,3S)-3-isopropylmalate + NAD(+) = 4-methyl-2-oxopentanoate + CO2 + NADH. It functions in the pathway amino-acid biosynthesis; L-leucine biosynthesis; L-leucine from 3-methyl-2-oxobutanoate: step 3/4. Functionally, catalyzes the oxidation of 3-carboxy-2-hydroxy-4-methylpentanoate (3-isopropylmalate) to 3-carboxy-4-methyl-2-oxopentanoate. The product decarboxylates to 4-methyl-2 oxopentanoate. The polypeptide is 3-isopropylmalate dehydrogenase (Colwellia psychrerythraea (strain 34H / ATCC BAA-681) (Vibrio psychroerythus)).